A 434-amino-acid chain; its full sequence is 23S rRNA (uracil(1939)-C(5))-methyltransferase RlmD (434 aa).

In terms of domain architecture, TRAM spans 10 to 68 (RVTTRQIITVTVNDLDPFGQGVARHQGKALFVSGVLPQEQAEVVLVEDKKQYARAQVKR). Residues Cys81, Cys87, Cys90, and Cys162 each contribute to the [4Fe-4S] cluster site. Residues Gln265, Phe294, Asn299, Glu315, Asn342, and Asp363 each contribute to the S-adenosyl-L-methionine site. Residue Cys389 is the Nucleophile of the active site.

This sequence belongs to the class I-like SAM-binding methyltransferase superfamily. RNA M5U methyltransferase family. RlmD subfamily.

The catalysed reaction is uridine(1939) in 23S rRNA + S-adenosyl-L-methionine = 5-methyluridine(1939) in 23S rRNA + S-adenosyl-L-homocysteine + H(+). Catalyzes the formation of 5-methyl-uridine at position 1939 (m5U1939) in 23S rRNA. This Klebsiella pneumoniae (strain 342) protein is 23S rRNA (uracil(1939)-C(5))-methyltransferase RlmD.